A 389-amino-acid chain; its full sequence is Terminal nucleotidyltransferase 5D (389 aa).

This sequence belongs to the TENT family. Restricted to testis.

It catalyses the reaction RNA(n) + ATP = RNA(n)-3'-adenine ribonucleotide + diphosphate. In terms of biological role, catalyzes the transfer of one adenosine molecule from an ATP to an mRNA poly(A) tail bearing a 3'-OH terminal group. The polypeptide is Terminal nucleotidyltransferase 5D (Homo sapiens (Human)).